The following is a 472-amino-acid chain: MPQTPPFSAMFDSSGYNRNLYQSAEDSCGGLYYHDNNLLSGSLEALIQHLVPNVDYYPDRTYIFTFLLSSRLFMHPYELMAKVCHLCVEHQRLSDPDSDKNQMRKIAPKVLQLLTEWTETFPYDFRDERMMRNLKDLAHRIASGEETYRKNVQQMMQCLIRKLAALSQYEEVLAKISSTSTDRLTVLKTKPQSIQRDIITVCNDPYTLAQQLTHIELERLNYIGPEEFVQAFVQKDPLDNDKSCYSERKKTRNLEAYVEWFNRLSYLVATEICMPVKKKHRARMIEYFIDVARECFNIGNFNSLMAIISGMNMSPVSRLKKTWAKVKTAKFDILEHQMDPSSNFYNYRTALRGAAQRSLTAHSSREKIVIPFFSLLIKDIYFLNEGCANRLPNGHVNFEKFWELAKQVSEFMTWKQVECPFERDRKILQYLLTVPVFSEDALYLASYESEGPENHIEKDRWKSLRSSLLGRV.

Positions 34–164 (HDNNLLSGSL…MMQCLIRKLA (131 aa)) constitute an N-terminal Ras-GEF domain. The Ras-GEF domain maps to 204-452 (DPYTLAQQLT…YLASYESEGP (249 aa)).

In terms of assembly, interacts with CCDC124 during cytokinesis. Interacts with Ras family proteins.

The protein localises to the early endosome. The protein resides in the late endosome. It is found in the midbody. Its function is as follows. Guanine nucleotide exchange factor (GEF) with specificity for RAP2A, it doesn't seems to activate other Ras family proteins (in vitro). This is Ras-GEF domain-containing family member 1B (RASGEF1B) from Pongo abelii (Sumatran orangutan).